The sequence spans 317 residues: Pectinesterase 31 (317 aa).

2 residues coordinate substrate: Thr-91 and Gln-121. Asp-144 functions as the Proton donor in the catalytic mechanism. Asp-165 (nucleophile) is an active-site residue. The substrate site is built by Arg-222 and Trp-224.

This sequence belongs to the pectinesterase family. In terms of tissue distribution, expressed in siliques.

The enzyme catalyses [(1-&gt;4)-alpha-D-galacturonosyl methyl ester](n) + n H2O = [(1-&gt;4)-alpha-D-galacturonosyl](n) + n methanol + n H(+). Its pathway is glycan metabolism; pectin degradation; 2-dehydro-3-deoxy-D-gluconate from pectin: step 1/5. With respect to regulation, does not require salt for activity. Not inhibited by kiwi pectin methylesterase inhibitor (PMEI). Functionally, acts in the modification of cell walls via demethylesterification of cell wall pectin. Acts in a blockwise manner, resulting in a cell wall rigidification. The protein is Pectinesterase 31 (PME31) of Arabidopsis thaliana (Mouse-ear cress).